A 270-amino-acid chain; its full sequence is 4-hydroxy-tetrahydrodipicolinate reductase (270 aa).

Residues Gly-8–Met-13, Asp-34, Gly-102–Thr-104, and Ser-128–Tyr-131 each bind NAD(+). The Proton donor/acceptor role is filled by His-160. His-161 contributes to the (S)-2,3,4,5-tetrahydrodipicolinate binding site. The active-site Proton donor is Lys-164. (S)-2,3,4,5-tetrahydrodipicolinate is bound at residue Gly-170–Thr-171.

It belongs to the DapB family.

It is found in the cytoplasm. It catalyses the reaction (S)-2,3,4,5-tetrahydrodipicolinate + NAD(+) + H2O = (2S,4S)-4-hydroxy-2,3,4,5-tetrahydrodipicolinate + NADH + H(+). It carries out the reaction (S)-2,3,4,5-tetrahydrodipicolinate + NADP(+) + H2O = (2S,4S)-4-hydroxy-2,3,4,5-tetrahydrodipicolinate + NADPH + H(+). Its pathway is amino-acid biosynthesis; L-lysine biosynthesis via DAP pathway; (S)-tetrahydrodipicolinate from L-aspartate: step 4/4. Its function is as follows. Catalyzes the conversion of 4-hydroxy-tetrahydrodipicolinate (HTPA) to tetrahydrodipicolinate. The sequence is that of 4-hydroxy-tetrahydrodipicolinate reductase from Methanococcus maripaludis (strain C5 / ATCC BAA-1333).